The sequence spans 669 residues: p135Gag-Myb-Ets-transforming protein (669 aa).

The segment covering 1-10 has biased composition (basic and acidic residues); sequence NSTMRRKVEQ. 2 disordered regions span residues 1–27 and 132–153; these read NSTM…SATT and TQNH…NTMT. The interval 90-142 is transcriptional activation domain; the sequence is PAAAAIQRHYNDEDPEKEKRIKELELLLMSTENELKGQQALPTQNHTANYPGW. Residues 276–361 enclose the PNT domain; that stretch reads ATFSGFAKEQ…EHLEILQKEE (86 aa). Residues 556-640 constitute a DNA-binding region (ETS); the sequence is GSGPIQLWQF…AGKRYVYRFV (85 aa).

The protein resides in the host nucleus. Functionally, DNA-binding protein that specifically recognizes the sequence 5'-YAAC[GT]G-3'. The Myb-Ets protein induces predominantly erythroblastosis in chicken and transforms avian erythroblasts and immature myelomonocytic cells in culture. It appears that the Ets domain is responsible for the effects on erythroid cells and that the Myb domain encodes the myeloid-transforming capacity. The chain is p135Gag-Myb-Ets-transforming protein (GAG) from Avian leukemia virus E26.